The chain runs to 340 residues: L-lysine 2,3-aminomutase (340 aa).

The region spanning 106 to 321 (RKYNNRILLL…SMISGFLVPK (216 aa)) is the Radical SAM core domain. Residues C120, C124, and C127 each contribute to the [4Fe-4S] cluster site. The residue at position 332 (K332) is an N6-(pyridoxal phosphate)lysine.

It belongs to the radical SAM superfamily. KamA family. [4Fe-4S] cluster is required as a cofactor. It depends on pyridoxal 5'-phosphate as a cofactor.

It catalyses the reaction L-lysine = D-beta-lysine. Functionally, with EpmA is involved in the beta-lysylation step of the post-translational modification of translation elongation factor P (EF-P) on 'Lys-34'. EpmB appears to act before EpmA. Displays lysine 2,3-aminomutase activity, producing (R)-beta-lysine from (S)-alpha-lysine (L-lysine). This is L-lysine 2,3-aminomutase (epmB) from Buchnera aphidicola subsp. Baizongia pistaciae (strain Bp).